Here is a 272-residue protein sequence, read N- to C-terminus: Bis(5'-nucleosyl)-tetraphosphatase, symmetrical (272 aa).

This sequence belongs to the Ap4A hydrolase family.

The catalysed reaction is P(1),P(4)-bis(5'-adenosyl) tetraphosphate + H2O = 2 ADP + 2 H(+). Its function is as follows. Hydrolyzes diadenosine 5',5'''-P1,P4-tetraphosphate to yield ADP. The protein is Bis(5'-nucleosyl)-tetraphosphatase, symmetrical of Chromohalobacter salexigens (strain ATCC BAA-138 / DSM 3043 / CIP 106854 / NCIMB 13768 / 1H11).